The following is a 430-amino-acid chain: Methylenetetrahydrofolate--tRNA-(uracil-5-)-methyltransferase TrmFO (430 aa).

Residue 9–14 (GAGLAG) participates in FAD binding.

Belongs to the MnmG family. TrmFO subfamily. Requires FAD as cofactor.

It is found in the cytoplasm. It carries out the reaction uridine(54) in tRNA + (6R)-5,10-methylene-5,6,7,8-tetrahydrofolate + NADH + H(+) = 5-methyluridine(54) in tRNA + (6S)-5,6,7,8-tetrahydrofolate + NAD(+). The enzyme catalyses uridine(54) in tRNA + (6R)-5,10-methylene-5,6,7,8-tetrahydrofolate + NADPH + H(+) = 5-methyluridine(54) in tRNA + (6S)-5,6,7,8-tetrahydrofolate + NADP(+). Its function is as follows. Catalyzes the folate-dependent formation of 5-methyl-uridine at position 54 (M-5-U54) in all tRNAs. This chain is Methylenetetrahydrofolate--tRNA-(uracil-5-)-methyltransferase TrmFO, found in Fervidobacterium nodosum (strain ATCC 35602 / DSM 5306 / Rt17-B1).